A 250-amino-acid polypeptide reads, in one-letter code: 2,5-dichloro-2,5-cyclohexadiene-1,4-diol dehydrogenase (250 aa).

9-34 (IIVTGGGSGIGRATVELLVASGANVA) is an NAD(+) binding site. Ser141 is a binding site for substrate. Tyr154 functions as the Proton acceptor in the catalytic mechanism.

This sequence belongs to the short-chain dehydrogenases/reductases (SDR) family.

The catalysed reaction is 2,5-dichlorocyclohexa-2,5-dien-1,4-diol + NAD(+) = 2,5-dichlorohydroquinone + NADH + H(+). It participates in xenobiotic degradation; gamma-hexachlorocyclohexane degradation. In terms of biological role, catalyzes the dehydrogenation of 2,5-dichloro-2,5-cyclohexadiene-1,4-diol (2,5-DDOL) to 2,5-dichlorohydroquinone (2,5-DCHQ), a step in the degradation of gamma-hexachlorocyclohexane (gamma-HCH or lindane). Has an essential role in this assimilation pathway that allows S.japonicum UT26 to grow on gamma-HCH as the sole source of carbon and energy. This Sphingobium indicum (strain DSM 16413 / CCM 7287 / MTCC 6362 / UT26 / NBRC 101211 / UT26S) (Sphingobium japonicum) protein is 2,5-dichloro-2,5-cyclohexadiene-1,4-diol dehydrogenase.